The sequence spans 358 residues: MVNSLTTPEPQTLKPGVKAPVQETLLTPRFYTTDFDAVANLDISANETEIRAIVEELRADYNRHHFVRDEEFKQSWDHITGEKRRAFIDFLERSCTSEFSGFLLFKELSRRIKSRNPLLAEAFEFMARDEARHAGFLNKSMSDLNLSLDLNYLTKNRTYTFFPPEWVIYTVYLSEKIGYWRYILVHQHMQEHPEYQFYPLFRKFESWCQDENRHGDFFKALLRSQPQLWKNWKARLWVRFFLLTVFVTHTMTVFERASFYESIGIHPRKYNNRVIQETNNTSARAFPLILNTNHPLFFWRLEQCWENNFKLAAIKNSKLPNFVKFFQRIPPATAIFWNMLRLFLIKPIDTEATRGTVL.

Belongs to the AcsF family. Fe cation is required as a cofactor.

It carries out the reaction Mg-protoporphyrin IX 13-monomethyl ester + 3 NADPH + 3 O2 + 2 H(+) = 3,8-divinyl protochlorophyllide a + 3 NADP(+) + 5 H2O. It functions in the pathway porphyrin-containing compound metabolism; chlorophyll biosynthesis (light-independent). Its function is as follows. Catalyzes the formation of the isocyclic ring in chlorophyll biosynthesis. Mediates the cyclase reaction, which results in the formation of divinylprotochlorophyllide (Pchlide) characteristic of all chlorophylls from magnesium-protoporphyrin IX 13-monomethyl ester (MgPMME). This is Magnesium-protoporphyrin IX monomethyl ester [oxidative] cyclase 2 from Nostoc sp. (strain PCC 7120 / SAG 25.82 / UTEX 2576).